The sequence spans 73 residues: U3-agatoxin-Ao1i (73 aa).

The N-terminal stretch at 1 to 20 (MRTIISLLLLSAMVFAEIEA) is a signal peptide. A propeptide spanning residues 21 to 34 (ISLEEGLQLFEGER) is cleaved from the precursor. 4 cysteine pairs are disulfide-bonded: Cys-36-Cys-52, Cys-43-Cys-57, Cys-51-Cys-67, and Cys-59-Cys-65. The residue at position 71 (Ser-71) is a Serine amide.

It belongs to the neurotoxin 07 (Beta/delta-agtx) family. 03 (aga-4) subfamily. Aga sub-subfamily. As to expression, expressed by the venom gland.

Its subcellular location is the secreted. Its function is as follows. Insecticidal neurotoxin that induces an irreversible spastic paralysis when injected into insects. Modifies presynaptic voltage-gated sodium channels (Nav), causing them to open at the normal resting potential of the nerve. This leads to spontaneous release of neurotransmitter and repetitive action potentials in motor neurons. This is U3-agatoxin-Ao1i from Agelena orientalis (Funnel-web spider).